The sequence spans 593 residues: tRNA (guanine(26)-N(2))-dimethyltransferase 1 (593 aa).

The Trm1 methyltransferase domain maps to threonine 9–methionine 465. Residue arginine 36 coordinates S-adenosyl-L-methionine. Positions alanine 56 to glutamate 118 are disordered. Composition is skewed to basic and acidic residues over residues valine 68–threonine 81 and aspartate 88–glutamate 118. 3 residues coordinate S-adenosyl-L-methionine: arginine 134, aspartate 152, and valine 185. Positions 315, 318, 350, and 353 each coordinate Zn(2+). Positions valine 546 to serine 593 are disordered. The segment covering glycine 558–glutamate 577 has biased composition (acidic residues). Residues proline 578–glutamate 587 are compositionally biased toward basic and acidic residues.

The protein belongs to the class I-like SAM-binding methyltransferase superfamily. Trm1 family.

The enzyme catalyses guanosine(26) in tRNA + 2 S-adenosyl-L-methionine = N(2)-dimethylguanosine(26) in tRNA + 2 S-adenosyl-L-homocysteine + 2 H(+). Its function is as follows. Dimethylates a single guanine residue at position 26 of most tRNAs using S-adenosyl-L-methionine as donor of the methyl groups. The sequence is that of tRNA (guanine(26)-N(2))-dimethyltransferase 1 from Arabidopsis thaliana (Mouse-ear cress).